The following is a 246-amino-acid chain: MKKPDIQQLKDIVNNSNQIVFFTGAGVSVASGIPDFRSMGGLYDEISKDGQSPEYLLSIDHLHDNKESFINFYHERLLIADKKPNIVHQWIAQLENQQKSLGVITQNIDGLHEDAGSHNIDELHGTLNRFYCINCYEEYSKSYVMTHHLKYCEKCGNVIRPDIVLYGEMLNQKTVFKALDKIQHADTLIVLGSSLVVQPAAGFVSEFKGDNLVIINRDATPYDHTASLVIHDDMTSVIEEIVNSNS.

A Deacetylase sirtuin-type domain is found at 1–246 (MKKPDIQQLK…VIEEIVNSNS (246 aa)). Residues Ala25, Phe36, Arg37, Gln106, Ile108, Asp109, and His124 each coordinate NAD(+). Phe36 serves as a coordination point for nicotinamide. Ile108 and Asp109 together coordinate nicotinamide. His124 (proton acceptor) is an active-site residue. Zn(2+)-binding residues include Cys132, Cys135, Cys152, and Cys155. Residues Ser193, Ser194, Asn216, and Asp233 each coordinate NAD(+).

Belongs to the sirtuin family. Class U subfamily. The cofactor is Zn(2+).

It localises to the cytoplasm. The enzyme catalyses N(6)-acetyl-L-lysyl-[protein] + NAD(+) + H2O = 2''-O-acetyl-ADP-D-ribose + nicotinamide + L-lysyl-[protein]. Its function is as follows. NAD-dependent protein deacetylase which modulates the activities of several enzymes which are inactive in their acetylated form. The polypeptide is NAD-dependent protein deacetylase (Staphylococcus epidermidis (strain ATCC 12228 / FDA PCI 1200)).